Reading from the N-terminus, the 306-residue chain is Ribonuclease Z (306 aa).

Zn(2+) contacts are provided by H63, H65, D67, H68, H140, D211, and H269. D67 serves as the catalytic Proton acceptor.

The protein belongs to the RNase Z family. In terms of assembly, homodimer. It depends on Zn(2+) as a cofactor.

It catalyses the reaction Endonucleolytic cleavage of RNA, removing extra 3' nucleotides from tRNA precursor, generating 3' termini of tRNAs. A 3'-hydroxy group is left at the tRNA terminus and a 5'-phosphoryl group is left at the trailer molecule.. In terms of biological role, zinc phosphodiesterase, which displays some tRNA 3'-processing endonuclease activity. Probably involved in tRNA maturation, by removing a 3'-trailer from precursor tRNA. The sequence is that of Ribonuclease Z from Listeria monocytogenes serovar 1/2a (strain ATCC BAA-679 / EGD-e).